The following is a 400-amino-acid chain: Nicotinate phosphoribosyltransferase (400 aa).

At H220 the chain carries Phosphohistidine; by autocatalysis.

It belongs to the NAPRTase family. In terms of processing, transiently phosphorylated on a His residue during the reaction cycle. Phosphorylation strongly increases the affinity for substrates and increases the rate of nicotinate D-ribonucleotide production. Dephosphorylation regenerates the low-affinity form of the enzyme, leading to product release.

The catalysed reaction is nicotinate + 5-phospho-alpha-D-ribose 1-diphosphate + ATP + H2O = nicotinate beta-D-ribonucleotide + ADP + phosphate + diphosphate. Its pathway is cofactor biosynthesis; NAD(+) biosynthesis; nicotinate D-ribonucleotide from nicotinate: step 1/1. Functionally, catalyzes the synthesis of beta-nicotinate D-ribonucleotide from nicotinate and 5-phospho-D-ribose 1-phosphate at the expense of ATP. This is Nicotinate phosphoribosyltransferase from Escherichia coli O157:H7.